The primary structure comprises 952 residues: Chaperone protein ClpC2, chloroplastic (952 aa).

The transit peptide at 1-45 (MAWSIALLTPPFFGPGRHVQAKEYREPRGCVMKMSSLKAPVLRIQ) directs the protein to the chloroplast. The 143-residue stretch at 115–257 (FERFTEKAIK…RTQVIRMVGE (143 aa)) folds into the Clp R domain. Repeat regions lie at residues 118 to 183 (FTEK…IGRG) and 193 to 257 (FTPR…MVGE). The tract at residues 278–525 (LEEYGTNLTK…RVRLRHAQLP (248 aa)) is i. An ATP-binding site is contributed by 323 to 330 (GEPGVGKT). In terms of domain architecture, UVR spans 532 to 567 (EKQLRQITKEKNEAVRSQDFEMAGSHRDREIELKAE). Residues 592-783 (VTESDIQHIV…LLIMTSNVGS (192 aa)) are II. ATP is bound at residue 666-673 (GPTGVGKS).

This sequence belongs to the ClpA/ClpB family. ClpC subfamily. Homodimer and homohexamer. Hexamerization upon addition of ATP. Interacts with CLPT1. Interacts with CLPS1. Stably associated with the import machinery. Interacts with CLPF. It depends on Mg(2+) as a cofactor. As to expression, expressed at low levels in roots and inflorescences. Expressed at very low levels in rosette leaves. Expressed in photosynthetic green tissues with high levels in young, developing leaf tissues.

It is found in the plastid. The protein resides in the chloroplast stroma. Its subcellular location is the chloroplast membrane. It catalyses the reaction ATP + H2O = ADP + phosphate + H(+). Its function is as follows. Molecular chaperone. May act as a suppressor of FtsH-mediated thylakoid membrane biogenesis and may enhance photoinhibition. Seems not involved in chloroplastic protein import. Probable component of the TIC-associated stromal import motor involved in inner membrane translocation. Has an ATPase activity, but no ADPase activity. Interacts with transit peptides with a positional preference. Localization of the signal sequence at the N-terminal end of a protein seems mandatory for interaction to take place. This is Chaperone protein ClpC2, chloroplastic from Arabidopsis thaliana (Mouse-ear cress).